Consider the following 172-residue polypeptide: Small ribosomal subunit protein uS5 (172 aa).

Residues 17 to 80 (LREKMISVNR…EQARRNMFKV (64 aa)) enclose the S5 DRBM domain.

It belongs to the universal ribosomal protein uS5 family. As to quaternary structure, part of the 30S ribosomal subunit. Contacts proteins S4 and S8.

With S4 and S12 plays an important role in translational accuracy. In terms of biological role, located at the back of the 30S subunit body where it stabilizes the conformation of the head with respect to the body. This Burkholderia pseudomallei (strain 1106a) protein is Small ribosomal subunit protein uS5.